The chain runs to 224 residues: Pro-thyrotropin-releasing hormone-B (224 aa).

The signal sequence occupies residues 1-15 (MMFLWWLLLLGTAIS). Pyrrolidone carboxylic acid is present on Gln-75. At Pro-77 the chain carries Proline amide. Residues 86 to 101 (EKRQHPGKRDLEDLQL) are compositionally biased toward basic and acidic residues. Disordered regions lie at residues 86–131 (EKRQ…DWSR) and 150–212 (RQHP…NSGN). A Pyrrolidone carboxylic acid modification is found at Gln-89. Residue Pro-91 is modified to Proline amide. Gln-105 is subject to Pyrrolidone carboxylic acid. At Pro-107 the chain carries Proline amide. Positions 110–129 (RYLEDMEKRQHPGKREEGDW) are enriched in basic and acidic residues. Position 119 is a pyrrolidone carboxylic acid (Gln-119). Pro-121 carries the proline amide modification. Gln-151 is modified (pyrrolidone carboxylic acid). Pro-153 is subject to Proline amide. Pyrrolidone carboxylic acid is present on Gln-166. Pro-168 is modified (proline amide). A compositionally biased stretch (basic and acidic residues) spans 182–199 (ENSKEVGKRQHPGKRYDP). Position 191 is a pyrrolidone carboxylic acid (Gln-191). Pro-193 carries the post-translational modification Proline amide.

The protein belongs to the TRH family.

It is found in the secreted. This chain is Pro-thyrotropin-releasing hormone-B (trh-b), found in Xenopus laevis (African clawed frog).